Reading from the N-terminus, the 155-residue chain is MGKEFSGVLNGQGLKIALVVSRFNEFITSKLLSGAKDSLERHGVSADNTDVAWVPGAFEIPLVAQKLAKSGRYDAVVCLGAVIRGSTPHFEYVSSEVSKGIARVGLDAGLPVIFGVITADSIEQAIERAGTKMGNKGFDAATQAIEVANLMKNLT.

Residues F23, 57 to 59 (AFE), and 81 to 83 (AVI) contribute to the 5-amino-6-(D-ribitylamino)uracil site. Residue 86-87 (ST) coordinates (2S)-2-hydroxy-3-oxobutyl phosphate. H89 acts as the Proton donor in catalysis. F114 is a binding site for 5-amino-6-(D-ribitylamino)uracil. R128 contacts (2S)-2-hydroxy-3-oxobutyl phosphate.

It belongs to the DMRL synthase family.

It carries out the reaction (2S)-2-hydroxy-3-oxobutyl phosphate + 5-amino-6-(D-ribitylamino)uracil = 6,7-dimethyl-8-(1-D-ribityl)lumazine + phosphate + 2 H2O + H(+). Its pathway is cofactor biosynthesis; riboflavin biosynthesis; riboflavin from 2-hydroxy-3-oxobutyl phosphate and 5-amino-6-(D-ribitylamino)uracil: step 1/2. Its function is as follows. Catalyzes the formation of 6,7-dimethyl-8-ribityllumazine by condensation of 5-amino-6-(D-ribitylamino)uracil with 3,4-dihydroxy-2-butanone 4-phosphate. This is the penultimate step in the biosynthesis of riboflavin. In Dehalococcoides mccartyi (strain ATCC BAA-2100 / JCM 16839 / KCTC 5957 / BAV1), this protein is 6,7-dimethyl-8-ribityllumazine synthase.